A 279-amino-acid chain; its full sequence is Digeranylgeranylglyceryl phosphate synthase (279 aa).

Transmembrane regions (helical) follow at residues 16 to 36 (LIAGLVGILGATVALGHLPPI), 40 to 60 (LLIFLVVFLECSWGNIINDYF), 77 to 99 (GALSKNIALVYGISLGGVAILIA), 104 to 121 (FEAFIFALGAYLLMYLYA), 124 to 144 (LKPQPFIGNLVVATLTGITPI), 146 to 166 (GAIAVGKIGLAGYLALCAFLV), 192 to 212 (IVWGIESSSKIGVIFSVATII), 220 to 240 (AGIGLGYFPIIIVDGIILWAA), and 259 to 279 (LKIAIYLAVFSFLLGSITKGV).

It belongs to the UbiA prenyltransferase family. DGGGP synthase subfamily. Mg(2+) is required as a cofactor.

Its subcellular location is the cell membrane. The enzyme catalyses sn-3-O-(geranylgeranyl)glycerol 1-phosphate + (2E,6E,10E)-geranylgeranyl diphosphate = 2,3-bis-O-(geranylgeranyl)-sn-glycerol 1-phosphate + diphosphate. The protein operates within membrane lipid metabolism; glycerophospholipid metabolism. Its function is as follows. Prenyltransferase that catalyzes the transfer of the geranylgeranyl moiety of geranylgeranyl diphosphate (GGPP) to the C2 hydroxyl of (S)-3-O-geranylgeranylglyceryl phosphate (GGGP). This reaction is the second ether-bond-formation step in the biosynthesis of archaeal membrane lipids. This Thermococcus sibiricus (strain DSM 12597 / MM 739) protein is Digeranylgeranylglyceryl phosphate synthase.